Reading from the N-terminus, the 427-residue chain is Glutamate-1-semialdehyde 2,1-aminomutase (427 aa).

Lys265 carries the N6-(pyridoxal phosphate)lysine modification.

The protein belongs to the class-III pyridoxal-phosphate-dependent aminotransferase family. HemL subfamily. In terms of assembly, homodimer. It depends on pyridoxal 5'-phosphate as a cofactor.

The protein localises to the cytoplasm. The enzyme catalyses (S)-4-amino-5-oxopentanoate = 5-aminolevulinate. Its pathway is porphyrin-containing compound metabolism; protoporphyrin-IX biosynthesis; 5-aminolevulinate from L-glutamyl-tRNA(Glu): step 2/2. The polypeptide is Glutamate-1-semialdehyde 2,1-aminomutase (Stutzerimonas stutzeri (strain A1501) (Pseudomonas stutzeri)).